The chain runs to 74 residues: uncharacterized protein (74 aa).

A helical transmembrane segment spans residues 20-40 (IYSYTLLTLLVITLICYLIHI).

It belongs to the asfivirus KP93L family.

The protein localises to the host membrane. This is an uncharacterized protein from African swine fever virus (isolate Tick/South Africa/Pretoriuskop Pr4/1996) (ASFV).